A 140-amino-acid chain; its full sequence is Putative nickel-responsive regulator 3 (140 aa).

Positions 81, 92, 94, and 100 each coordinate Ni(2+).

This sequence belongs to the transcriptional regulatory CopG/NikR family. Ni(2+) is required as a cofactor.

In terms of biological role, transcriptional regulator. The protein is Putative nickel-responsive regulator 3 of Methanosarcina acetivorans (strain ATCC 35395 / DSM 2834 / JCM 12185 / C2A).